A 968-amino-acid chain; its full sequence is RNA polymerase-associated protein RapA (968 aa).

A Helicase ATP-binding domain is found at 164–334; that stretch reads EVGQRHAPRV…FARLRLLDPN (171 aa). ATP is bound at residue 177–184; sequence DEVGLGKT. Residues 280–283 carry the DEAH box motif; sequence DEAH. The Helicase C-terminal domain occupies 493–644; the sequence is WLVDFLLDLR…TCPTGRALYD (152 aa).

The protein belongs to the SNF2/RAD54 helicase family. RapA subfamily. As to quaternary structure, interacts with the RNAP. Has a higher affinity for the core RNAP than for the holoenzyme. Its ATPase activity is stimulated by binding to RNAP.

Its function is as follows. Transcription regulator that activates transcription by stimulating RNA polymerase (RNAP) recycling in case of stress conditions such as supercoiled DNA or high salt concentrations. Probably acts by releasing the RNAP, when it is trapped or immobilized on tightly supercoiled DNA. Does not activate transcription on linear DNA. Probably not involved in DNA repair. The sequence is that of RNA polymerase-associated protein RapA from Sodalis glossinidius (strain morsitans).